A 736-amino-acid chain; its full sequence is Elongation factor 2 (736 aa).

One can recognise a tr-type G domain in the interval 18-261 (EQIRNIGITA…MVVKHIPNPR (244 aa)). GTP contacts are provided by residues 27–34 (AHVDHGKT), 93–97 (DTPGH), and 147–150 (NKID). H602 is subject to Diphthamide.

The protein belongs to the TRAFAC class translation factor GTPase superfamily. Classic translation factor GTPase family. EF-G/EF-2 subfamily.

The protein resides in the cytoplasm. In terms of biological role, catalyzes the GTP-dependent ribosomal translocation step during translation elongation. During this step, the ribosome changes from the pre-translocational (PRE) to the post-translocational (POST) state as the newly formed A-site-bound peptidyl-tRNA and P-site-bound deacylated tRNA move to the P and E sites, respectively. Catalyzes the coordinated movement of the two tRNA molecules, the mRNA and conformational changes in the ribosome. This is Elongation factor 2 from Desulfurococcus amylolyticus (strain DSM 18924 / JCM 16383 / VKM B-2413 / 1221n) (Desulfurococcus kamchatkensis).